We begin with the raw amino-acid sequence, 123 residues long: Small ribosomal subunit protein uS12c (123 aa).

It belongs to the universal ribosomal protein uS12 family. As to quaternary structure, part of the 30S ribosomal subunit.

Its subcellular location is the plastid. It localises to the chloroplast. Functionally, with S4 and S5 plays an important role in translational accuracy. Located at the interface of the 30S and 50S subunits. This chain is Small ribosomal subunit protein uS12c (rps12), found in Chlorokybus atmophyticus (Soil alga).